Reading from the N-terminus, the 208-residue chain is FMN-dependent NADH:quinone oxidoreductase 4 (208 aa).

This sequence belongs to the azoreductase type 1 family. In terms of assembly, homodimer. It depends on FMN as a cofactor.

The catalysed reaction is 2 a quinone + NADH + H(+) = 2 a 1,4-benzosemiquinone + NAD(+). The enzyme catalyses N,N-dimethyl-1,4-phenylenediamine + anthranilate + 2 NAD(+) = 2-(4-dimethylaminophenyl)diazenylbenzoate + 2 NADH + 2 H(+). Quinone reductase that provides resistance to thiol-specific stress caused by electrophilic quinones. Its function is as follows. Also exhibits azoreductase activity. Catalyzes the reductive cleavage of the azo bond in aromatic azo compounds to the corresponding amines. This is FMN-dependent NADH:quinone oxidoreductase 4 from Bacillus cereus (strain ZK / E33L).